The chain runs to 73 residues: DNA-directed RNA polymerase subunit Rpo10 (73 aa).

Zn(2+) is bound by residues Cys7, Cys10, Cys44, and Cys45.

This sequence belongs to the archaeal Rpo10/eukaryotic RPB10 RNA polymerase subunit family. Part of the RNA polymerase complex. Forms an Rpo3-Rpo10-Rpo11-Rpo12 complex upon coexpression. The cofactor is Zn(2+).

The protein resides in the cytoplasm. The enzyme catalyses RNA(n) + a ribonucleoside 5'-triphosphate = RNA(n+1) + diphosphate. Functionally, DNA-dependent RNA polymerase (RNAP) catalyzes the transcription of DNA into RNA using the four ribonucleoside triphosphates as substrates. The chain is DNA-directed RNA polymerase subunit Rpo10 from Methanocaldococcus jannaschii (strain ATCC 43067 / DSM 2661 / JAL-1 / JCM 10045 / NBRC 100440) (Methanococcus jannaschii).